Reading from the N-terminus, the 350-residue chain is Protein RecA (350 aa).

68 to 75 (GPESSGKT) provides a ligand contact to ATP.

The protein belongs to the RecA family.

It is found in the cytoplasm. Functionally, can catalyze the hydrolysis of ATP in the presence of single-stranded DNA, the ATP-dependent uptake of single-stranded DNA by duplex DNA, and the ATP-dependent hybridization of homologous single-stranded DNAs. It interacts with LexA causing its activation and leading to its autocatalytic cleavage. In Symbiobacterium thermophilum (strain DSM 24528 / JCM 14929 / IAM 14863 / T), this protein is Protein RecA.